The primary structure comprises 864 residues: Mitochondrial 15S rRNA processing factor CCM1 (864 aa).

Residues 1–76 (MYMARCGPKN…REFSNTLKER (76 aa)) constitute a mitochondrion transit peptide. 2 PPR repeats span residues 319 to 353 (NKQNLTTVIQFYSRKEMTKQAWNTFDTMKFLSTKH) and 356 to 390 (DICTYNTMLRICEKERNFPKALDLFQEIQDHNIKP).

Belongs to the CCM1 family. As to quaternary structure, binds to mitochondrial small subunit 15S rRNA.

The protein resides in the mitochondrion. In terms of biological role, regulates mitochondrial small subunit maturation by controlling 15S rRNA 5'-end processing. Localizes to the 5' precursor of the 15S rRNA in a position that is subsequently occupied by mS47 in the mature yeast mtSSU. Uses structure and sequence-specific RNA recognition, binding to a single-stranded region of the precursor and specifically recognizing bases -6 to -1. The exchange of Ccm1 for mS47 is coupled to the irreversible removal of precursor rRNA that is accompanied by conformational changes of the mitoribosomal proteins uS5m and mS26. These conformational changes signal completion of 5'-end rRNA processing through protection of the mature 5'-end of the 15S rRNA and stabilization of mS47. The removal of the 5' precursor together with the dissociation of Ccm1 may be catalyzed by the 5'-3' exoribonuclease Pet127. Involved in the specific removal of group I introns in mitochondrial encoded transcripts. The polypeptide is Mitochondrial 15S rRNA processing factor CCM1 (CCM1) (Saccharomyces cerevisiae (strain JAY291) (Baker's yeast)).